A 452-amino-acid chain; its full sequence is Phosphoglucosamine mutase 2 (452 aa).

The active-site Phosphoserine intermediate is the Ser101. Positions 101, 245, 247, and 249 each coordinate Mg(2+). Ser101 is modified (phosphoserine).

This sequence belongs to the phosphohexose mutase family. Mg(2+) is required as a cofactor. Activated by phosphorylation.

It carries out the reaction alpha-D-glucosamine 1-phosphate = D-glucosamine 6-phosphate. Its function is as follows. Catalyzes the conversion of glucosamine-6-phosphate to glucosamine-1-phosphate. This is Phosphoglucosamine mutase 2 from Shewanella amazonensis (strain ATCC BAA-1098 / SB2B).